The sequence spans 690 residues: Translation factor GUF1, mitochondrial (690 aa).

The interval 40 to 68 (SVTVPAARRHNSTKSTNSTTSTNSTTATS) is disordered. The span at 52-68 (TKSTNSTTSTNSTTATS) shows a compositional bias: low complexity. Residues 89 to 272 (ERYRNFCIVA…AVIKKMPAPV (184 aa)) form the tr-type G domain. Residues 98–105 (AHIDHGKS), 165–169 (DTPGH), and 219–222 (NKID) each bind GTP.

The protein belongs to the TRAFAC class translation factor GTPase superfamily. Classic translation factor GTPase family. LepA subfamily.

It is found in the mitochondrion inner membrane. It catalyses the reaction GTP + H2O = GDP + phosphate + H(+). In terms of biological role, promotes mitochondrial protein synthesis. May act as a fidelity factor of the translation reaction, by catalyzing a one-codon backward translocation of tRNAs on improperly translocated ribosomes. Binds to mitochondrial ribosomes in a GTP-dependent manner. The sequence is that of Translation factor GUF1, mitochondrial from Sordaria macrospora (strain ATCC MYA-333 / DSM 997 / K(L3346) / K-hell).